Consider the following 536-residue polypeptide: Membrane protein insertase YidC (536 aa).

A helical membrane pass occupies residues 7–27 (IIAVVLSLFVLIGWSYLSEFM). A disordered region spans residues 43-70 (VQQKASEPVAQPVQTASAPAASSFAPTE). Residues 58 to 68 (ASAPAASSFAP) show a composition bias toward low complexity. 3 consecutive transmembrane segments (helical) span residues 346-366 (GNYG…FWPL), 415-435 (GGCL…QGLL), and 495-515 (IMMF…AGLV).

This sequence belongs to the OXA1/ALB3/YidC family. Type 1 subfamily. In terms of assembly, interacts with the Sec translocase complex via SecD. Specifically interacts with transmembrane segments of nascent integral membrane proteins during membrane integration.

The protein resides in the cell inner membrane. Required for the insertion and/or proper folding and/or complex formation of integral membrane proteins into the membrane. Involved in integration of membrane proteins that insert both dependently and independently of the Sec translocase complex, as well as at least some lipoproteins. Aids folding of multispanning membrane proteins. The sequence is that of Membrane protein insertase YidC from Oleidesulfovibrio alaskensis (strain ATCC BAA-1058 / DSM 17464 / G20) (Desulfovibrio alaskensis).